Reading from the N-terminus, the 155-residue chain is MGETPFWKTKGLEEMTGAEWESLCDGCGLCCLNKLEDWDSSEIAWTSIRCTLLDGESCRCKDYDNRQATVPDCIQLTPKAVREISWLPPTCGYRLVAEGRDLYWWHPLVSGDPETVHAAGISVRGRTVAEDGIDIEDYEDYLVTWPLEVGREPAD.

Belongs to the UPF0260 family.

The chain is UPF0260 protein R01011 from Rhizobium meliloti (strain 1021) (Ensifer meliloti).